A 171-amino-acid chain; its full sequence is Ribosome maturation factor RimM (171 aa).

A PRC barrel domain is found at 97 to 169; that stretch reads DGEFYYHEII…RVDVDIMEGL (73 aa).

Belongs to the RimM family. Binds ribosomal protein uS19.

The protein resides in the cytoplasm. In terms of biological role, an accessory protein needed during the final step in the assembly of 30S ribosomal subunit, possibly for assembly of the head region. Essential for efficient processing of 16S rRNA. May be needed both before and after RbfA during the maturation of 16S rRNA. It has affinity for free ribosomal 30S subunits but not for 70S ribosomes. In Lactococcus lactis subsp. cremoris (strain SK11), this protein is Ribosome maturation factor RimM.